The chain runs to 8545 residues: MSSSPPARPCCVCFRFRPHEDEKAQKNTFTRWINFHLEEHSSSGRIEDLFEDIRDGVLLCHLIEVLTGEALAVHKGRVSKRVHHIANLTTALTVLRRRGLELINNNAADIADGNPRIVLGLIWQIILHFQIETNMILLREWGWAATGTEEPTSSAQPEVVVTAPSPTPSSKKSHSKVSSLSGSKTSLASGEKAPSSPLRQRIASFLTPTKKAPKLTAQPVKQSVEQVFLRWINAEIGDLVGGRRVENMDKQWRDGILFCALVSRWRPDVISMREVTNANPRDNLELAFNLAHQHLGVRRLLAVEDMMIEKPDKRSVITYVSQFVRMFGERSPMQGREQHEIFLAWLEATYLLCTRHELNSQECSRIRREFIEHRPLFNTIIVTKVNYDVEELVEIEKKWDCIRETLEKYARRSERDLPEPFASIATWIAGAEHILSRPLDLDATDAKKTVTMLQKLISEHQKYMEDLPKRQEDFEEAVKHGGLGGRPVAPEFSEPLRARFAQIEEENEPRISTLRILTTHYILLQYLQHIDEKIILWRTADSVTLLLRWIKEYTQLNAENPQAKCASYINKITLTMANDQNSKLDKEAILNTSNEKTAETLKRFESLWIELKLLKVEWVEWETHVSQLEEIIEERRRNGVPPTPEDEQALAVITAGADQLAPKLGASARLSNNQRLDVLTHSFKKLTKTTIKIGGRLVVELEPSTSEQASKISYSWQASDELLKVEMQLRDRIQRDADSSDREQLEYRAETFRNIRDKLIELERLNEIYDNHSRDQVDTPNRNLIRHDMGTIIYGLQAGQYANFVDLSCYAFVYDEYNQVPVNLTENVLSEDYVREIVNRKKAILTRRENNEDEIRESIRDMEECDRIIEGWQSTEIEELRAEWNIKLSEFESWHEMMQQVEVLSQTIQTRLDVTVIQTIWILKERSYDIKHSELGGTLRESLEQLATTSETSVNRHLQNLELSNEQDCPDAIEFLEEVGRESVSKLSAAVDDRYIYTLHVLRTKMELFRRLQNFCDAVKILRSQNTKWNGIKISQIDQVQSEIDTLIVRLDEEWTQDANQLRAELASIHGSFFQLEFDRLNEKLNMLIHDKDKLRELMVHRRHYLTAANELITDSKTDLAQRATSSDHPDDILRATDEVTKALDIKGEELRRLGELAEMNITDLVVVALILSFRRRQLGSEGEPEVEELRRALREIIARPITEPRDVSPDAIVADILRMKDEKKRDEKTIDEIQATTLTDEQRASFAPLIEDYRRRADRHRIVFEHLVMIYLDWLSRQFDELEDEIGMTIQTSRADDLRRMNSTEWNKWKTDLANIERQVGPDTKKALSAELADLHRKRDSMEARINKYLTHSAKINAKLTQFEKWLNAIEEDIEQTERQFEDPERSYRFGSLHEVALAKQRLVAKLERLNVANKEEVLRLCERYHTIMHKLTPFQTAVGLPLHVSTNLDRNGPFQSQISVSSIASSELERPESVMSLTSSIGVIPADVAELSPFEAKINKLLQKLHIIEDSYLKGPKPIDTVREDVKQLEKYRNRGAEILQQLSTSNIEDAEKEGLKHRFVLMLNNYDDILRSIENEIRDDNELTAKNQEILAELSNAEQTLQNSPLEDLDISAELDRLQMQLDLVKVMCNKPRKYVECELIDSSREGSPQERRRRKKKVMVMVSNTITTIIHVVEERLEASDISRNPDVQQKLVAVKENLRELDTTTVTPHPPSIMSPLGTENRNDLEEVKRLAAEIDRAIDTASSMYEDAPTDEDALKSAIHLLDDQKVTLNHLHVVLEGIPEKNEQDRTDAIDIASSVGEKLGNLKSAVEEVYEEVLASTNPVKEDQPLQHIQEVQTTPAEQSNWDTDEFSRQPPVLSDERIELKTDPSAIDKFEVRSDEDPVPKIIDLFGQLQTAVNEASPLACEGTDDVDALQVASDKLTKQDRTIRKIHAILDTIDDPVQKPAIIESLDKIKDQINNARDNINRQIDNLNYNQTPVVVPKESTKTPLNEIEDAVRQASTVVSDELCNTEKLLSARQTLANVKPQVDSVEANVWSNPETIETVTPILEEYTTLVDNIEKKLANEIEVPTNDPSRQDLVQQLQDVILECEEVVVNCDNIEKLEESKLKLEKARPLLDQIGDNVEKLSREQSPDTSDAIDALSNVHQQYNATIMSIDDKIDELKNPEEDTSAADQLISELHVISEMPAVTIDLSMLNAIEEGLSTLPAHQAENVQAKIDELRQKKEVADQTEQILSDLNAFGDMPAITLDLDLLKSVEDGIAVLPVEDSERIKAKIVDLRKKKEDADQAEALLQELSVISDMPISTLDLNMLQGIEDNLNSLPAEESDEIREKLNELRRRKQESDQAEALLQELSVISDMPISTLDLNMLQGVEDNLNSLPTEEADKIREKINDLRRRKQESDLAEALLQELSVIYDMPTSTIDLNMLQGIEDNLNSLPAEESDKIREKINDLRRRKQESDLAEALLQELSVIYDMPTSTIDLNMLQGIEDNLNSLPAEESDKIREKINDLRRRKQESDQAEALLQELSVVSDMPASTIDINMLQSIEDGLSTLLSEDRSKIQQAIDSLRKKKSDSDLAQHALEALSVQSKLPSVSINLEELKKLEETLSTVPVEDSKVIRDKIAELKTEKALADHAENYLVELKKIEDMPISAVGSDVLATIEDQILQMPVQYQPSVKETLDKLKQAKEEDDKLAGVYDELEKIAKLPARDYDNKLLAKIDEKLNSLPKDQIAETHRKVEDIKVTKADIVAQIDVLDKLPAKDIDEHLLNSIEEKLPTIPSDSSDQLQIAIGKLRDRKQANIDEGKKILNELAEIQKMPADSLNEHALNLLATESDKFGSEISDKIMQEIDVLREKQNNHEVARLNAESVLQQLDKISEEPHLSLTEERLAPFLQNIDTVPACFVDKIRNKINEVQKLHDEAVQDEKDELKEKLVAKVQNIGKTSIDDVNVSDFEEIEREINGSLEAFEAEPLLAKIQELREAKRVGDEARSAAHDQIVALEKEAEDVTAKESAKKKKKDKKKSPQEMIDELSAKVVEAKALIPKIEEAAKNENLPADDKPKAEQLVSNLEAFVKDVETQVSEKQDELDKLNNANDAIKRLGDALDDAEKTVVPSSVPALSEFKDRIAPHLATLVEAVNDVPASVEPSAVALRDRAAKFVSDLEKNIQKTGDDEKRADELKNDVGNAVKNVEDVVSKYQNQPQPLDVAKDDANKLKATVEQLTKLAESSDKIDPQVAKDIKDSKTKAKELLQALEKAIPQEDAIRREQAEINDRLNNLEKELTKVDEFKPEDALPIVDQLAANTNTLKTATDSNNEKAVAPSSLISHDDLVVGLPEKVFQLQHAIDDKKQALNKAAAVNEIAPKLQLVSQQLQSVPQEVPASLDEQKQLLEDVENQKHNLENLLANLPENDPTADELRQKSQWDLSRLKDLLKQLGSAVGDKLAALAAFNAARKNAEDALLDITREDGGDDNKSPDELIDDLAKKEETVAKLLDTVSGVKPDELDDKERAEYNDLLARLATAADVLKNKRAELEQAVKAKADEKSLHDSVDRIVSRLVPLVRESDELRHNAEAVPTQYAPKAEELKKEVEAAKAVIANAPSSDAHVQQLEQAVATAETLIPDLEERARLWNEFLAARNDIDALIEQLQQPLDAVLAQPKRSAEEAAQDVENLRNNSQQLSDLDNKIANLQRISELLDPLESAYADVRFFDVDAEQTRHQYDDVLNDVAAELEDETLLKQSASQVANEIDDISKMIDSTDPERSILDTIAKSDIPALKAQINRIKDRIVNADASRKHVTTDPKIAEDLDNKLAKLQTELDDAIKTSDEHDKEQLILSLKLNISQFEQIPLDQLKSDDLKTAEKEITNSLKPEEAEPLLAKIQELREAKRVGDEARSAAHDQIVALEKEAEDVTAKESAKKKKKDKKKSPQEMIDELSAKVVEAKALIPKIEEAAKNENLPADDKPKAEQLVSNLEAFVKDVETQVSEKQDELDKLNNANDAIKRLGDALDDAEKTVVPSSVPALSEFKDRIAPHLATLVEAVNDVPASVEPSAVALRDRAAKFVSDLEKNIQKTGDDEKRADELKNDDGNAVKNVEDVVSKYQNQPQPLDVAKDDANKLKATVEQLTKLAESSDKIDPQVAKDIKDSKTKAKELLQALEKAIPQEDAIRREQAEINDRLNNLEKELTKVDEFKPEDALPIVDQLAANTNTLKTATDSNNEKAVAPSSLISHDDLVVGLPEKVFQLQHAIDDKKQALNKAAAVNEIAPKLQLVSQQLQSVPQEVPASLDEQKQLLEDVENQKHNLENLLANLPENDPTADELRQKSQWDLSRLKDLLKQLGSAVGDKLAALAAFNAARKNAEDALLDITREDGGDDNKSPDELIDDRGRSTGSAVGDKLAALAAFNAARKNAEDALLDITREDGGDDNKSPDELIDDLAKKEETVAKLLDTVSGVKPDELDDKERAEYNDLLARLATAADVLKNKRAELEQAVKAKADEKSLHDSVDRIVSRLVPLVRESDELRHNAEAVPTQYAPKAEELKKEVEAAKAVIANAPSSDAHVQQLEQAVATAETLIPDLEERARLWNEFLAARNDIDALIEQLQQPLDAVLAQPKRSAEEAAQDVENLRNNSQQLSDLDNKIANLQRISELLDPLESAYADVRFFDVDAEQTRHQYDDVLNDVAAELEDETLLKQSASQVANEIDDISKMIDSTDPERSILDTIAKSDIPALKAQINRIKDRIVNADASRKHVTTDPKIAEDLDNKLAKLQTELDDAIKTSDEHDKEQLILSLKLNISQFEQIPLDQLKSDDLKTAEKEITNSLKPEEAEPLLAKIQELREAKRVGDEARSAAHDQIVALEKEAEDVTAKESAKKKKKDKKKSPQEMIDELSAKVVEAKALIPKIEEAAKNENLPADDKPKAEQLVSNLEAFVKDVETQVSEKQDELDKLNNANDAIKRLGDALDDAEKTVVPSSVPALSEFKDRIAPHLATLVEAVNDVPASVEPSAVALRDRAAKFVSDLEKNIQKTGDDEKRADELKNDVGNAVKNVEDVVSKYQNQPQPLDVAKDDANKLKATVEQLTKLAESSDKIDPQVAKDIKDSKTKAKELLQALEKAIPQEDAIRREQAEINDRLNNLEKELTKVDEFKPEDALPIVDQLAANTNTLKTATDSNNEKAVAPSSLISHDDLVVGLPEKVFQLQHAIDDKKQALNKAAAVNEIAPKLQLVSQQLQSVPQEVPASLDEQKQLLEDVENQKHNLENLLANLPENDPTADELRQKSQWDLSRLKDLLKQLGSAVGDKLAALAAFNAARKNAEDALLDITREDGGDDNKSPDELIDDLAKKEETVAKLLDTVSGVKPDELDDKERAEYNDLLARLATAADVLKNKRAELEQAVKAKADEKSLHDSVDRIVSRLVPLVRESDELRHNAEAVPTQYAPKAEELKKEVEAAKAVIANAPSSDAHVQQLEQAVATAETLIPDLEERARLWNEFLAARNDIDALIEQLQQPLDAVLAQPKRSAEEAAQDVENLRNNSQQLSDLDNKIANLQRISELLDPLESAYADVRFFDVDAEQTRHQYDDVLNDVAAELEDETLLKQSASQVANEIDDISKMIDSTDPERSILDTIAKSDIPALKAQINRIKDRIVNADASRKHVTTDPKIAEDLDNKLAKLQTELDDAIKTSDEHDKEQLILSLKLNISQFEQIPLDQLKSDDLKTAEKEITNSLKPEEAEPLLAKIQELREAKRVGDEARSAAHDQIVALEKEAEDVTAKESAKKKKKDKKKSPQEMIDELSAKVVEAKALIPKIEEAAKNENLPADDKPKAEQLVSNLEAFVKDVETQVSEKQDELDKLNNANDAIKRLGDALDDAEKTVVPSSVPALSEFKDRIAPHLATLVEAVNDVPASVEPSAVALRDRAAKFVSDLEKNIQKTGDDEKRADELKNDVGNAVKNVEDVVSKYQNQPQPLDVAKDDANKLKATVEQLTKLAESSDKIDPQVAKDIKDSKTKAKELLQALEKAIPQEDAIRREQAEINDRLNNLEKELTKVDEFKPEDALPIVDQLAANTNTLKTATDSNNEKAVAPSSLISHDDLVVGLPEKVFQLQHAIDDKKQALNKAAAVNEIAPKLQLVSQQLQSVPQEVPASLDEQKQLLEDVENQKHNLENLLANLPENDPTADELRQKSQWDLSRLKDLLKQLGSAVGDKLAALAAFNAARKNAEDALLDITREDGGDDNKSPDELIDDLAKKEETVAKLLDTVSGVKPDELDDKERAEYNDLLARLATAADVLKNKRAELEQAVKAKADEKSLHDSVDRIVSRLVPLVRESDELRHNAEAVPTQYAPKAEELKKEVEAAKAVIANAPSSDAHVQQLEQAVATAETLIPDLEERARLWNEFLAARNDIDALIEQLQQPLDAVLAQPKRSAEEAAQDVENLRNNSQQLSDLDNKIANLQRISELLDPLESAYADVRFFDVDAEQTRHQYDDVLNDVAAELEDETLLKQSASQVANEIDDISKMIDSTDPERSILDTIAKSDIPALKAQINRIKDRIVNADASRKHVTTDPKIAEDLDNKLAKLQTELDDAIKTSDEHDKEQLILSLKLNISQFEQIPLDQLKSDDLKTAEKEITNSLKPEEAEPLLAKIQELREAKRVGDEARSAAHDQIVALEKEAEDVTAKESAKKKKKDKKKSPQEMIDELSAKVVEAKALIPKIEEAAKNENLPADDKPKAEQLVSNLEAFVKDVETQVSEKQDELDKLNNANDAIKRLGDALDDAEKTVVPSSVPALSEFKDRIAPHLATLVEAVNDVPASVEPSAVALRDRAAKFVSDLEKNIQKTGDDEKRADELKNDVGNAVKNVEDVVSKYQNQPQPLDVAKDDANKLKATVEQLTKLAESSDKIDPQVAKDIKDSKTKAKELLQALEKAIPQEDAIRREQAEINDRLNNLEKELTKVDEFKPEDALPIVDQLAANTNTLKTATDSNNEKAVAPSSLISHDDLVVGLPEKVFQLQHAIDDKKQALNKAAAVNEIAPKLQLVSQQLQSVPQEVPASLDEQKQLLEDVENQKHNLENLLANLPENDPTADELRQKSQWDLSRLKDLLKQLGSAVGDKLAALAAFNAARKNAEDALLDITREDGGDDNKSPDELIDDLAKKEETVAKLLDTVSGVKPDELDDKERAEYNDLLARLATAADVLKNKRAELEQAVKAKADEKSLHDSVDRIVSRLVPLVRESDELRHNAEAVPTQYAPKAEELKKEVEAAKAVIANAPSSDAHVQQLEQAVATAETLIPDLEERARLWNEFLAARNDIDALIEQLQQPLDAVLAQPKRSAEEAAQDVENLRNNSQQLSDLDNKIANLQRISELLDPLESAYADVRFFDVDAEQTRHQYDDVLNDVAAELEDETLLKQSASQVANEIDDISKMIDSTDPERSILDTIAKSDIPALKAQINRIKDRIVNADASRKHVTTDPKIAEDLDNKLAKLQTELDDAIKTSDEHDKEQLILSLKLNISQFEQIPLDQLKSDDLKTAEKEITNSLKPEEAEPLLAKIQELREAKRVGDEARSAAHDQIVALEKEAEDVTAKESAKKKKKDKKKSPQEMIDELSAKVVEAKALIPKIEEAAKNENLPADDKPKAEQLVSNLEAFVKDVETQVSEKQDELDKLNNANDAIKRLGDALDDAEKTVVPSSVPALSEFKDRIAPHLATLVEAVNDVPASVEPSAVALRDRAAKFVSDLEKNIQKTGDDEKRADELKNDVGNAVKNVEDVVSKYQNQPQPLDVAKDDANKLKATVEQLTKLAESSDKIDPQVAKDIKDSKTKAKELLQALEKAIPQEDAIRREQAEINDRLNKLEKELTKVDEFKPEDALPIVDQLAANTNTLKTATDSNNEKAVAPSSLISHDDLVVGLPEKVFQLQHAIDDKKQALNKAAAVNEIAPKLQLVSQQLQSVPQEVPASLDEQKQLLEDVENQKHNLENLLANLPENDPTADELRQKSQWDLSRLKDLLKQLGSAVGEKLAALAAFNAARKNAEDALLDITREDGGDDNKSPDELIDDLAKKEETVAKLLDTVSGVKPDELDDKERAEYNDLLARLATAADVLKNKRAELEQAVKAKADEKSLHDSVDRIVSRLVPLVRESDELRHNAEAVPTQYAPKAEELKKEVEAAKAVIANAPSSDAHVQQLEQAVATAETLIPDLEERASIWERFVKAKDDLYDYLEKLENNVSDVLNRPRLPVSQAQQRFNKLKEQSYLLDRIRDLKIDFDDLGEALLPLTVAEDELRFMHVHVESIERQYEDTMDKLNAEITAEVELLRTLDILSNELSQCKEDINNPSVDVDELSRATMLNDAIAHLENQKVVVARSEKDRKFVESSTSIDLDQLLAEAKRLLKEIEPRLQLAQPDHDNEDDEDEEKGSDEKPYDVRAAAEVLSALYPDEHPHNVLRNIGFEELPSDSESRSEFDSLDSRSDGLLSPIPDDSTLSEEQLRRQRSRWRRVLRTALPLQALLVLLMGAACLVPHCDDEYCCQLLNNFAKSFDPSLEFVNGPPPF.

The interval 1–325 (MSSSPPARPC…VITYVSQFVR (325 aa)) is actin-binding. Over 1-8494 (MSSSPPARPC…QRSRWRRVLR (8494 aa)) the chain is Cytoplasmic. The Calponin-homology (CH) 1 domain occupies 23–130 (KAQKNTFTRW…LIWQIILHFQ (108 aa)). The tract at residues 148 to 197 (TEEPTSSAQPEVVVTAPSPTPSSKKSHSKVSSLSGSKTSLASGEKAPSSP) is disordered. Residues 159-190 (VVVTAPSPTPSSKKSHSKVSSLSGSKTSLASG) show a composition bias toward low complexity. Positions 222–328 (QSVEQVFLRW…YVSQFVRMFG (107 aa)) constitute a Calponin-homology (CH) 2 domain. 19 coiled-coil regions span residues 754–774 (NIRD…NHSR), 1072–1101 (SFFQ…LMVH), 1215–1236 (ADIL…EIQA), 1324–1384 (DTKK…QFED), 1574–1629 (RSIE…DLVK), 1725–1754 (ENRN…YEDA), 1950–1981 (PAII…NYNQ), 2103–2580 (DNIE…KKSD), 2682–2712 (SVKE…KIAK), 2852–2949 (IMQE…NIGK), 3002–3119 (DQIV…KTVV), 3178–3295 (DDEK…DEFK), 3346–3417 (QLQH…PEND), 3482–3552 (DELI…EKSL), 3587–3703 (KAEE…ELLD), 3781–3839 (ALKA…KEQL), 3902–4022 (AAHD…KTVV), 4114–4198 (LDVA…DEFK), and 4249–4320 (QLQH…PEND). Positions 3010–3019 (EAEDVTAKES) are enriched in basic and acidic residues. The segment at 3010–3033 (EAEDVTAKESAKKKKKDKKKSPQE) is disordered. A run of 6 repeats spans residues 3241–4143 (QVAK…KIDP), 4144–5097 (QVAK…KIDP), 5098–6000 (QVAK…KIDP), 6001–6903 (QVAK…KIDP), 6904–7806 (QVAK…KIDP), and 7807–8199 (QVAK…EERA). Positions 3241 to 8199 (QVAKDIKDSK…TLIPDLEERA (4959 aa)) are 6 X tandem repeat. The segment covering 3913 to 3922 (EAEDVTAKES) has biased composition (basic and acidic residues). A disordered region spans residues 3913–3936 (EAEDVTAKESAKKKKKDKKKSPQE). Basic and acidic residues predominate over residues 4372–4393 (ITREDGGDDNKSPDELIDDRGR). Residues 4372–4395 (ITREDGGDDNKSPDELIDDRGRST) are disordered. Coiled coils occupy residues 4436-4506 (DELI…EKSL), 4541-4657 (KAEE…ELLD), 4735-4793 (ALKA…KEQL), 4856-4976 (AAHD…KTVV), 5035-5152 (DDEK…DEFK), 5203-5274 (QLQH…PEND), 5339-5409 (DELI…EKSL), 5444-5560 (KAEE…ELLD), 5638-5696 (ALKA…KEQL), 5759-5879 (AAHD…KTVV), 5938-6055 (DDEK…DEFK), 6106-6177 (QLQH…PEND), 6242-6312 (DELI…EKSL), 6347-6463 (KAEE…ELLD), 6541-6599 (ALKA…KEQL), 6662-6782 (AAHD…KTVV), 6841-6958 (DDEK…DEFK), 7009-7080 (QLQH…PEND), 7145-7215 (DELI…EKSL), 7250-7366 (KAEE…ELLD), 7444-7502 (ALKA…KEQL), 7565-7685 (AAHD…KTVV), 7744-7861 (DDEK…DEFK), 7912-7983 (QLQH…PEND), 8048-8118 (DELI…EKSL), 8153-8204 (KAEE…IWER), 8273-8329 (VAED…DINN), and 8370-8390 (STSI…KEIE). A compositionally biased stretch (basic and acidic residues) spans 4867–4876 (EAEDVTAKES). The tract at residues 4867–4890 (EAEDVTAKESAKKKKKDKKKSPQE) is disordered. Residues 5770–5779 (EAEDVTAKES) are compositionally biased toward basic and acidic residues. The disordered stretch occupies residues 5770 to 5793 (EAEDVTAKESAKKKKKDKKKSPQE). The segment covering 6673 to 6682 (EAEDVTAKES) has biased composition (basic and acidic residues). Residues 6673–6696 (EAEDVTAKESAKKKKKDKKKSPQE) are disordered. The segment covering 7576–7585 (EAEDVTAKES) has biased composition (basic and acidic residues). The tract at residues 7576-7599 (EAEDVTAKESAKKKKKDKKKSPQE) is disordered. Disordered stretches follow at residues 8391–8418 (PRLQ…KPYD) and 8449–8480 (SDSE…LSEE). The span at 8401-8411 (DNEDDEDEEKG) shows a compositional bias: acidic residues. Residues 8451–8464 (SESRSEFDSLDSRS) are compositionally biased toward basic and acidic residues. Residues 8486 to 8545 (RSRWRRVLRTALPLQALLVLLMGAACLVPHCDDEYCCQLLNNFAKSFDPSLEFVNGPPPF) form the KASH domain. Residues 8495–8513 (TALPLQALLVLLMGAACLV) form a helical; Anchor for type IV membrane protein membrane-spanning segment. Residues 8514 to 8545 (PHCDDEYCCQLLNNFAKSFDPSLEFVNGPPPF) lie on the Perinuclear space side of the membrane.

It belongs to the nesprin family. In terms of assembly, interacts with F-actin via its N-terminal domain. Most likely interacts with unc-84; the interaction is probably required to recruit anc-1 to the nuclear envelope. As to expression, ubiquitously expressed in all postembryonic cells.

It localises to the nucleus outer membrane. The protein localises to the cytoplasm. The protein resides in the cytoskeleton. Its function is as follows. Plays a central role in nuclear and mitochondrial anchoring. Probably connects nuclei to the cytoskeleton by interacting with unc-84 at the nuclear envelope and with F-actin in the cytoplasm, creating a bridge across the nuclear envelope between the cytoskeleton and the nucleus. Has a role in positioning of the cell body of the PVQ lumbar interneuron. This Caenorhabditis elegans protein is Nuclear anchorage protein 1.